The following is a 254-amino-acid chain: Low affinity immunoglobulin gamma Fc region receptor III-A (254 aa).

A signal peptide spans 1–16 (MWQLLLPTALLLLVSA). Residues 17–208 (GMRAEDLPKA…ISSFFPPGYQ (192 aa)) lie on the Extracellular side of the membrane. 2 Ig-like C2-type domains span residues 24 to 105 (PKAV…LEVH) and 107 to 189 (GWLL…VNIT). Cystine bridges form between C47/C89 and C128/C172. N-linked (GlcNAc...) asparagine glycans are attached at residues N56, N63, and N82. 2 N-linked (GlcNAc...) asparagine glycosylation sites follow: N180 and N187. The helical transmembrane segment at 209–229 (VSFCLVMVLLFAVDTGLYFSM) threads the bilayer. Topologically, residues 230 to 254 (KKSIPSSTRDWEDHKFKWSKDPQDK) are cytoplasmic.

In terms of assembly, forms a heterooligomeric complex with ITAM-containing signaling subunits, either a homodimer of CD247, a homodimer of FCER1G or a heterodimer of CD247 and FCER1G. Interacts (via transmembrane domain) with signaling subunits; this interaction is a prerequisite for receptor complex expression on the cell surface and intracellular signal transduction. Binds the Fc region of antigen-complexed IgG with a preference for IgG1 and IgG3 isotypes. Interacts with CD2; this interaction is involved in NK cell activation and cytotoxicity. Interacts with S100A4; this interaction inhibits PKC-dependent phosphorylation of FCGR3A. Glycosylated. Glycosylation plays an inhibitory role in the interaction with IgG1 and IgG2. In terms of processing, undergoes rapid ectodomain shedding upon NK cell stimulation. The soluble form is produced by a proteolytic cleavage mediated by ADAM17. Repeated stimulation causes receptor shedding, a mechanism that allows for increased NK cell motility and detachment from opsonized target cells while avoiding activation-induced NK cell apoptosis. As to expression, lymphocytes and monocytes.

The protein localises to the cell membrane. The protein resides in the secreted. Receptor for the invariable Fc fragment of immunoglobulin gamma (IgG). Optimally activated upon binding of clustered antigen-IgG complexes displayed on cell surfaces, triggers lysis of antibody-coated cells, a process known as antibody-dependent cellular cytotoxicity (ADCC). Does not bind free monomeric IgG, thus avoiding inappropriate effector cell activation in the absence of antigenic trigger. Mediates IgG effector functions on natural killer (NK) cells. Binds antigen-IgG complexes generated upon infection and triggers NK cell-dependent cytokine production and degranulation to limit viral load and propagation. Involved in the generation of memory-like adaptive NK cells capable to produce high amounts of IFNG and to efficiently eliminate virus-infected cells via ADCC. Regulates NK cell survival and proliferation, in particular by preventing NK cell progenitor apoptosis. Fc-binding subunit that associates with CD247 and/or FCER1G adapters to form functional signaling complexes. Following the engagement of antigen-IgG complexes, triggers phosphorylation of immunoreceptor tyrosine-based activation motif (ITAM)-containing adapters with subsequent activation of phosphatidylinositol 3-kinase signaling and sustained elevation of intracellular calcium that ultimately drive NK cell activation. The ITAM-dependent signaling coupled to receptor phosphorylation by PKC mediates robust intracellular calcium flux that leads to production of pro-inflammatory cytokines, whereas in the absence of receptor phosphorylation it mainly activates phosphatidylinositol 3-kinase signaling leading to cell degranulation. Costimulates NK cells and trigger lysis of target cells independently of IgG binding. Mediates the antitumor activities of therapeutic antibodies. Upon ligation on monocytes triggers TNFA-dependent ADCC of IgG-coated tumor cells. Mediates enhanced ADCC in response to afucosylated IgGs. The chain is Low affinity immunoglobulin gamma Fc region receptor III-A (FCGR3A) from Macaca fascicularis (Crab-eating macaque).